A 106-amino-acid chain; its full sequence is Stress-responsive protein 1 (106 aa).

The protein localises to the mitochondrion. Stress-responsive protein that may play a role in regulation of cell cycle. This is Stress-responsive protein 1 (sro1) from Schizosaccharomyces pombe (strain 972 / ATCC 24843) (Fission yeast).